Consider the following 915-residue polypeptide: p53-induced death domain-containing protein 1 (915 aa).

Alanine 2 bears the N-acetylalanine mark. 7 LRR repeats span residues 131-152, 154-176, 177-199, 200-221, 223-245, 246-268, and 269-290; these read CLAHLDLSFNRLETLPTCVPEL, GLDALLLSHNHLSELPEALGALP, ALTFLTVTHNRLERLPLTLGSLS, TLQRLDLSENLLDTIPSEIGNL, SLSELNLASNRLQSLPASLAGLR, SLRLLVLHSNLLTSVPTGLVHLP, and LITRLDLRDNRLRDLPAELLDA. Serine 304 carries the phosphoserine modification. ZU5 domains are found at residues 327 to 459 and 460 to 601; these read DLDS…VLRP and VSNT…WYTT. Peptidase S68 stretches follow at residues 428–457 and 571–599; these read DLETQLEEEAPKRLWARCQVPHFSWFLVVL and DITTQVALEFTHLYARFQVTHFSWYWLWY. Residues histidine 449, serine 451, histidine 591, and serine 593 contribute to the active site. The interval 585 to 721 is UPA domain; the sequence is ARFQVTHFSW…TTALDREAQD (137 aa). The Death domain maps to 793-878; it reads TQSNLLSVAS…DVAEEVRAIL (86 aa). Positions 888-915 are disordered; sequence SIRRTGLAPEDSTLPGTSASQTPESAQA. Polar residues predominate over residues 901-915; it reads LPGTSASQTPESAQA.

In terms of assembly, forms a complex named the PIDDosome with CASP2 and CRADD. Forms a complex with IKBKG and RIPK1. Interacts with FADD and MADD. Post-translationally, undergoes autoproteolytic processing whose extent either directs cells towards survival or apoptotic pathways. Autoproteolytically cleaved into two main fragments PIDD-N and PIDD-C. PIDD-C can be further processed into PIDD-CC, a processing which is enhanced by DNA damage. The cleavage producing PIDD-C is required for translocation of PIDD1 to the nucleus upon DNA damage and activation of NF-kappa-B. PIDD-CC mediates the interaction with CRADD and the cleavage producing PIDD-CC is required for the activation of CASP2. PIDD-N remains associated with PIDD-C and PIDD-CC after cleavage. As to expression, ubiquitous.

It is found in the cytoplasm. It localises to the nucleus. Functionally, component of the DNA damage/stress response pathway that functions downstream of p53/TP53 and can either promote cell survival or apoptosis. Associated with CRADD and the CASP2 caspase, it forms the PIDDosome a complex that activates CASP2 and triggers apoptosis. Associated with IKBKG and RIPK1, it enhances sumoylation and ubiquitination of IKBKG which is important for activation of the transcription factor NF-kappa-B. The chain is p53-induced death domain-containing protein 1 from Mus musculus (Mouse).